Reading from the N-terminus, the 152-residue chain is SsrA-binding protein (152 aa).

It belongs to the SmpB family.

The protein resides in the cytoplasm. Its function is as follows. Required for rescue of stalled ribosomes mediated by trans-translation. Binds to transfer-messenger RNA (tmRNA), required for stable association of tmRNA with ribosomes. tmRNA and SmpB together mimic tRNA shape, replacing the anticodon stem-loop with SmpB. tmRNA is encoded by the ssrA gene; the 2 termini fold to resemble tRNA(Ala) and it encodes a 'tag peptide', a short internal open reading frame. During trans-translation Ala-aminoacylated tmRNA acts like a tRNA, entering the A-site of stalled ribosomes, displacing the stalled mRNA. The ribosome then switches to translate the ORF on the tmRNA; the nascent peptide is terminated with the 'tag peptide' encoded by the tmRNA and targeted for degradation. The ribosome is freed to recommence translation, which seems to be the essential function of trans-translation. This chain is SsrA-binding protein, found in Rickettsia akari (strain Hartford).